A 481-amino-acid polypeptide reads, in one-letter code: uncharacterized protein (481 aa).

Belongs to the UbiD family.

This is an uncharacterized protein from Archaeoglobus fulgidus (strain ATCC 49558 / DSM 4304 / JCM 9628 / NBRC 100126 / VC-16).